Here is a 390-residue protein sequence, read N- to C-terminus: F-box/kelch-repeat protein At3g04660 (390 aa).

The 50-residue stretch at 18–67 folds into the F-box domain; the sequence is YDPSSILPLELKIEILMKSPPKSIAKLGFVSNHWSSIIRGQVFTDLYMRR. Kelch repeat units lie at residues 115–161 and 272–323; these read FSPP…FGYD and MVDH…DQRV.

In terms of assembly, part of a SCF (ASK-cullin-F-box) protein ligase complex. Interacts with SKP1A/ASK1, SKP1B/ASK2, ASK11 and ASK13.

The protein resides in the nucleus. It functions in the pathway protein modification; protein ubiquitination. In terms of biological role, component of SCF(ASK-cullin-F-box) E3 ubiquitin ligase complexes, which may mediate the ubiquitination and subsequent proteasomal degradation of target proteins. The polypeptide is F-box/kelch-repeat protein At3g04660 (Arabidopsis thaliana (Mouse-ear cress)).